The following is a 385-amino-acid chain: Putative ESX-1 scaffolding and assembly protein SaeC (385 aa).

It is found in the cytoplasm. May be involved in assembly of the ESX-1 / type VII specialized secretion system (T7SS), which exports several proteins including EsxA and EsxB. Involved in DNA conjugation in recipient (MKD8) strain. This chain is Putative ESX-1 scaffolding and assembly protein SaeC, found in Mycolicibacterium smegmatis (strain ATCC 700084 / mc(2)155) (Mycobacterium smegmatis).